The sequence spans 168 residues: 6-pyruvoyl tetrahydrobiopterin synthase (168 aa).

His19 is a binding site for Zn(2+). The Proton acceptor role is filled by Cys38. Zn(2+)-binding residues include His44 and His46. Catalysis depends on charge relay system residues His85 and Glu130. Phosphoserine is present on Ser159. A Phosphothreonine modification is found at Thr161. Phosphoserine is present on residues Ser164, Ser165, and Ser167.

Belongs to the PTPS family. In terms of assembly, homohexamer formed of two homotrimers in a head to head fashion. It depends on Zn(2+) as a cofactor.

It catalyses the reaction 7,8-dihydroneopterin 3'-triphosphate = 6-pyruvoyl-5,6,7,8-tetrahydropterin + triphosphate + H(+). It participates in cofactor biosynthesis; tetrahydrobiopterin biosynthesis; tetrahydrobiopterin from 7,8-dihydroneopterin triphosphate: step 1/3. Required for pigment and biopterin synthesis. The protein is 6-pyruvoyl tetrahydrobiopterin synthase (pr) of Drosophila melanogaster (Fruit fly).